Consider the following 145-residue polypeptide: UPF0179 protein Msm_0285 (145 aa).

This sequence belongs to the UPF0179 family.

This chain is UPF0179 protein Msm_0285, found in Methanobrevibacter smithii (strain ATCC 35061 / DSM 861 / OCM 144 / PS).